A 178-amino-acid chain; its full sequence is ATP synthase subunit delta (178 aa).

The protein belongs to the ATPase delta chain family. In terms of assembly, F-type ATPases have 2 components, F(1) - the catalytic core - and F(0) - the membrane proton channel. F(1) has five subunits: alpha(3), beta(3), gamma(1), delta(1), epsilon(1). F(0) has three main subunits: a(1), b(2) and c(10-14). The alpha and beta chains form an alternating ring which encloses part of the gamma chain. F(1) is attached to F(0) by a central stalk formed by the gamma and epsilon chains, while a peripheral stalk is formed by the delta and b chains.

It localises to the cell inner membrane. Its function is as follows. F(1)F(0) ATP synthase produces ATP from ADP in the presence of a proton or sodium gradient. F-type ATPases consist of two structural domains, F(1) containing the extramembraneous catalytic core and F(0) containing the membrane proton channel, linked together by a central stalk and a peripheral stalk. During catalysis, ATP synthesis in the catalytic domain of F(1) is coupled via a rotary mechanism of the central stalk subunits to proton translocation. This protein is part of the stalk that links CF(0) to CF(1). It either transmits conformational changes from CF(0) to CF(1) or is implicated in proton conduction. The sequence is that of ATP synthase subunit delta from Cellvibrio japonicus (strain Ueda107) (Pseudomonas fluorescens subsp. cellulosa).